The following is a 207-amino-acid chain: uncharacterized protein (207 aa).

5 helical membrane-spanning segments follow: residues 28-48, 59-79, 112-132, 140-160, and 165-185; these read IAVL…IVFV, EGFI…FLIV, MFLL…VAGL, FILA…FIGY, and LITQ…LWYV.

Its subcellular location is the cell membrane. This is an uncharacterized protein from Bacillus subtilis (strain 168).